A 909-amino-acid chain; its full sequence is MAPVRAPTARHRLVARRRLREGGFQTPNGASIQFPLPAYPWQSPLLGPEGNLLIENGDNKNETSGDVDPAKATKADLFPYGVAAKITGVEGRGTGEFTLLVEGVTRIHVEKVIADKAYLEGKVSSYADPALITDSALEELFMSLKLLSRQFVTILRLSSLLPQSSGTPGLSPLLARRLDFYIAKQKYPGALADFMANIVESTYEEKLQILTLIDVKERVAKVIELLDRQVTNIKNSMKITTITATSLPFPMDPDSTKPGKVKPPVKAPGQGVGMPFPPQGGFMGRGGNPDDEQEPNEIEELQKRLDAARLSPEAAKIADREIKRLKKIHPAQAEYAVTRTYLETLAEIPWTATTDDRLGPDTLNRARKQLDDDHYGLDKVKKRLLEYLAVLRLKQAINDDVDIQIKQIEQELGVGSENGKEDAAQPAAVDLTVDEKVKAGGAKLEALKNRRMVDKSPILLLVGPPGVGKTSLARSVATALGRKFHRISLGGVRDEAEIRGHRRTYVAAMPGLVVQGLKKVGVANPVFLLDEIDKVGGSSIHGDPSAAMLEVLDPEQNHNFTDHYVNIPIDLSKVLFIATANSLDTIPAPLLDRMETIYIPGYTTLEKRHIAMQHLVPKQLRVNGLDESQVSFTPEVVSKIIESYTREAGVRNLEREISSVARGKAVEFADAKDSGHPENYNPQLTVDDLEKFLGIEKFEEEIAEKTSRPGIVTGLVAYSSGGNGSILFIEVADMPGNGSVQLTGKLGDVLKESVEVALTWVKAHAYELGLTQSPNENIMKDRSIHVHCPSGAVPKDGPSSGISQAIALISLFSGKAVPSTMAMTGEISLRGRITAVGGIKEKLIGALRAGVKTVLLPAQNRKDVKDLPQEVKDGLEIIHVSHIWEAIRYVWPDGQWPSEHDYPSVESRL.

The 230-residue stretch at 1-230 (MAPVRAPTAR…KVIELLDRQV (230 aa)) folds into the Lon N-terminal domain. Positions 249 to 269 (FPMDPDSTKPGKVKPPVKAPG) are disordered. ATP is bound at residue 463 to 470 (GPPGVGKT). The Lon proteolytic domain occupies 706 to 893 (TSRPGIVTGL…WEAIRYVWPD (188 aa)). Residues Ser799 and Lys842 contribute to the active site. Positions 907-909 (SRL) match the Microbody targeting signal motif.

This sequence belongs to the peptidase S16 family.

The protein resides in the peroxisome matrix. The protein localises to the cytoplasm. It catalyses the reaction Hydrolysis of proteins in presence of ATP.. In terms of biological role, ATP-dependent serine protease that mediates the selective degradation of misfolded and unassembled polypeptides in the peroxisomal matrix. Necessary for type 2 peroxisome targeting signal (PTS2)-containing protein processing and facilitates peroxisome matrix protein import. This chain is Lon protease homolog 2, peroxisomal, found in Sordaria macrospora (strain ATCC MYA-333 / DSM 997 / K(L3346) / K-hell).